The primary structure comprises 271 residues: Shikimate kinase (271 aa).

Position 83–93 (83–93 (PIAMGLKSSSA)) interacts with ATP.

This sequence belongs to the GHMP kinase family. Archaeal shikimate kinase subfamily.

Its subcellular location is the cytoplasm. It catalyses the reaction shikimate + ATP = 3-phosphoshikimate + ADP + H(+). The protein operates within metabolic intermediate biosynthesis; chorismate biosynthesis; chorismate from D-erythrose 4-phosphate and phosphoenolpyruvate: step 5/7. The chain is Shikimate kinase from Thermococcus kodakarensis (strain ATCC BAA-918 / JCM 12380 / KOD1) (Pyrococcus kodakaraensis (strain KOD1)).